Consider the following 542-residue polypeptide: ATP synthase subunit beta (542 aa).

Low complexity predominate over residues 1-50 (MAKTPAKAPAAAAKPAAVKKPAAPKAAAAPKAAAVATPAAKKPAAPKAAP). The tract at residues 1–61 (MAKTPAKAPA…SKVAGTREKP (61 aa)) is disordered. An ATP-binding site is contributed by 216–223 (GGAGVGKT).

Belongs to the ATPase alpha/beta chains family. In terms of assembly, F-type ATPases have 2 components, CF(1) - the catalytic core - and CF(0) - the membrane proton channel. CF(1) has five subunits: alpha(3), beta(3), gamma(1), delta(1), epsilon(1). CF(0) has three main subunits: a(1), b(2) and c(9-12). The alpha and beta chains form an alternating ring which encloses part of the gamma chain. CF(1) is attached to CF(0) by a central stalk formed by the gamma and epsilon chains, while a peripheral stalk is formed by the delta and b chains.

The protein resides in the cell inner membrane. The enzyme catalyses ATP + H2O + 4 H(+)(in) = ADP + phosphate + 5 H(+)(out). In terms of biological role, produces ATP from ADP in the presence of a proton gradient across the membrane. The catalytic sites are hosted primarily by the beta subunits. The sequence is that of ATP synthase subunit beta from Caulobacter sp. (strain K31).